The chain runs to 351 residues: Sulfate/thiosulfate import ATP-binding protein CysA (351 aa).

The ABC transporter domain occupies 3–237; the sequence is ITVRNLHKRF…PRSAFVYEFL (235 aa). Residue 35–42 participates in ATP binding; it reads GPSGCGKT.

Belongs to the ABC transporter superfamily. Sulfate/tungstate importer (TC 3.A.1.6) family. The complex is composed of two ATP-binding proteins (CysA), two transmembrane proteins (CysT and CysW) and a solute-binding protein (CysP).

The protein resides in the cell inner membrane. It carries out the reaction sulfate(out) + ATP + H2O = sulfate(in) + ADP + phosphate + H(+). The enzyme catalyses thiosulfate(out) + ATP + H2O = thiosulfate(in) + ADP + phosphate + H(+). Part of the ABC transporter complex CysAWTP involved in sulfate/thiosulfate import. Responsible for energy coupling to the transport system. This Burkholderia mallei (strain ATCC 23344) protein is Sulfate/thiosulfate import ATP-binding protein CysA.